Consider the following 319-residue polypeptide: 4-hydroxy-3-methylbut-2-enyl diphosphate reductase (319 aa).

Cys-12 serves as a coordination point for [4Fe-4S] cluster. (2E)-4-hydroxy-3-methylbut-2-enyl diphosphate-binding residues include His-41 and His-74. His-41 and His-74 together coordinate dimethylallyl diphosphate. The isopentenyl diphosphate site is built by His-41 and His-74. Cys-97 lines the [4Fe-4S] cluster pocket. His-125 serves as a coordination point for (2E)-4-hydroxy-3-methylbut-2-enyl diphosphate. Residue His-125 participates in dimethylallyl diphosphate binding. His-125 is a binding site for isopentenyl diphosphate. Glu-127 functions as the Proton donor in the catalytic mechanism. A (2E)-4-hydroxy-3-methylbut-2-enyl diphosphate-binding site is contributed by Thr-168. Cys-198 lines the [4Fe-4S] cluster pocket. The (2E)-4-hydroxy-3-methylbut-2-enyl diphosphate site is built by Ser-226, Ser-227, Asn-228, and Ser-270. Positions 226, 227, 228, and 270 each coordinate dimethylallyl diphosphate. Positions 226, 227, 228, and 270 each coordinate isopentenyl diphosphate.

Belongs to the IspH family. Homodimer. [4Fe-4S] cluster is required as a cofactor.

The catalysed reaction is isopentenyl diphosphate + 2 oxidized [2Fe-2S]-[ferredoxin] + H2O = (2E)-4-hydroxy-3-methylbut-2-enyl diphosphate + 2 reduced [2Fe-2S]-[ferredoxin] + 2 H(+). It catalyses the reaction dimethylallyl diphosphate + 2 oxidized [2Fe-2S]-[ferredoxin] + H2O = (2E)-4-hydroxy-3-methylbut-2-enyl diphosphate + 2 reduced [2Fe-2S]-[ferredoxin] + 2 H(+). It functions in the pathway isoprenoid biosynthesis; dimethylallyl diphosphate biosynthesis; dimethylallyl diphosphate from (2E)-4-hydroxy-3-methylbutenyl diphosphate: step 1/1. It participates in isoprenoid biosynthesis; isopentenyl diphosphate biosynthesis via DXP pathway; isopentenyl diphosphate from 1-deoxy-D-xylulose 5-phosphate: step 6/6. Functionally, catalyzes the conversion of 1-hydroxy-2-methyl-2-(E)-butenyl 4-diphosphate (HMBPP) into a mixture of isopentenyl diphosphate (IPP) and dimethylallyl diphosphate (DMAPP). Acts in the terminal step of the DOXP/MEP pathway for isoprenoid precursor biosynthesis. This is 4-hydroxy-3-methylbut-2-enyl diphosphate reductase from Hamiltonella defensa subsp. Acyrthosiphon pisum (strain 5AT).